The sequence spans 397 residues: Plasma membrane iron permease (397 aa).

A run of 4 helical transmembrane segments spans residues 61–81 (FTAL…FYAL), 92–112 (IWEG…GFAM), 177–197 (AFPL…YFIY), and 292–312 (GSIL…FLMW). A phosphoserine mark is found at serine 337 and serine 338. Positions 337 to 346 (SSHTPVQSSS) are enriched in polar residues. Positions 337–364 (SSHTPVQSSSSEDEFKINSPTDDKGDKA) are disordered. The residue at position 340 (threonine 340) is a Phosphothreonine. Phosphoserine is present on residues serine 346, serine 347, and serine 355. Basic and acidic residues predominate over residues 349–364 (DEFKINSPTDDKGDKA). Residue threonine 357 is modified to Phosphothreonine. Serine 374, serine 375, and serine 376 each carry phosphoserine.

It belongs to the oxidase-dependent Fe transporter (OFeT) (TC 9.A.10.1) family.

It localises to the membrane. In terms of biological role, permease for high affinity iron uptake. This is Plasma membrane iron permease (fip1) from Schizosaccharomyces pombe (strain 972 / ATCC 24843) (Fission yeast).